A 111-amino-acid chain; its full sequence is Short neuropeptide F (111 aa).

The signal sequence occupies residues 1–24; sequence MSAMYAKRCAALVLLVVTVGLVNA. Positions 25 to 76 are excised as a propeptide; that stretch reads TENYMDYGEEMAEKTPAENIHELYRLLLQRNTLDNAGFGGIPLEHLMIRKSQ. Residue F85 is modified to Phenylalanine amide. A propeptide spanning residues 88–111 is cleaved from the precursor; sequence SGPHVSARALPRPMGAVAGYDDNN.

In terms of tissue distribution, expressed throughout the central nervous system (at protein level).

The protein resides in the secreted. Plays a role in controlling food intake and regulating body size. In Camponotus floridanus (Florida carpenter ant), this protein is Short neuropeptide F.